The primary structure comprises 323 residues: tRNA U34 carboxymethyltransferase (323 aa).

Carboxy-S-adenosyl-L-methionine is bound by residues Lys-91, Trp-105, Lys-110, Gly-130, 181–182, Met-196, Tyr-200, and Arg-315; that span reads IE.

Belongs to the class I-like SAM-binding methyltransferase superfamily. CmoB family. Homotetramer.

It catalyses the reaction carboxy-S-adenosyl-L-methionine + 5-hydroxyuridine(34) in tRNA = 5-carboxymethoxyuridine(34) in tRNA + S-adenosyl-L-homocysteine + H(+). Its function is as follows. Catalyzes carboxymethyl transfer from carboxy-S-adenosyl-L-methionine (Cx-SAM) to 5-hydroxyuridine (ho5U) to form 5-carboxymethoxyuridine (cmo5U) at position 34 in tRNAs. The polypeptide is tRNA U34 carboxymethyltransferase (Sodalis glossinidius (strain morsitans)).